We begin with the raw amino-acid sequence, 336 residues long: Dihydroorotate dehydrogenase (quinone) (336 aa).

FMN contacts are provided by residues 62–66 (AGLDK) and Thr86. Residue Lys66 coordinates substrate. 111–115 (NRMGF) is a substrate binding site. Positions 139 and 172 each coordinate FMN. Asn172 serves as a coordination point for substrate. The Nucleophile role is filled by Ser175. Substrate is bound at residue Asn177. 2 residues coordinate FMN: Lys217 and Thr245. Residue 246–247 (NT) coordinates substrate. Residues Gly268, Gly297, and 318–319 (YS) each bind FMN.

It belongs to the dihydroorotate dehydrogenase family. Type 2 subfamily. In terms of assembly, monomer. The cofactor is FMN.

The protein localises to the cell membrane. The catalysed reaction is (S)-dihydroorotate + a quinone = orotate + a quinol. The protein operates within pyrimidine metabolism; UMP biosynthesis via de novo pathway; orotate from (S)-dihydroorotate (quinone route): step 1/1. Functionally, catalyzes the conversion of dihydroorotate to orotate with quinone as electron acceptor. The chain is Dihydroorotate dehydrogenase (quinone) from Vibrio vulnificus (strain YJ016).